The primary structure comprises 30 residues: Unknown protein from spot 365 of 2D-PAGE of etiolated coleoptile (30 aa).

The protein belongs to the zinc-containing alcohol dehydrogenase family.

The sequence is that of Unknown protein from spot 365 of 2D-PAGE of etiolated coleoptile from Zea mays (Maize).